The primary structure comprises 41 residues: Large ribosomal subunit protein bL36 (41 aa).

It belongs to the bacterial ribosomal protein bL36 family.

The protein is Large ribosomal subunit protein bL36 of Bartonella quintana (strain Toulouse) (Rochalimaea quintana).